The primary structure comprises 335 residues: Dehydration-responsive element-binding protein 2A (335 aa).

2 disordered regions span residues 1-32 (MAVY…GTTV) and 50-74 (STKK…GPEN). A Nuclear localization signal motif is present at residues 19-55 (RKRKSRSRGDGTTVAERLKRWKEYNETVEEVSTKKRK). Positions 52-66 (KKRKVPAKGSKKGCM) are enriched in basic residues. A DNA-binding region (AP2/ERF) is located at residues 78–135 (SFRGVRQRIWGKWVAEIREPNRGSRLWLGTFPTAQEAASAYDEAAKAMYGPLARLNFP). A disordered region spans residues 279-304 (QDRYPGNSVANGSYRPESQQSGFDPL). Residues 286–304 (SVANGSYRPESQQSGFDPL) are compositionally biased toward polar residues.

Belongs to the AP2/ERF transcription factor family. ERF subfamily. Interacts with MED25. Binds to DPB3-1 in the nucleus during heat-stress. Post-translationally, ubiquitinated by DRIP1 and DRIP2. Ubiquitination probably leads to its subsequent degradation, thus negatively regulating response to drought. Expressed preferentially in roots and stems, and at a lower level in leaves.

Its subcellular location is the nucleus. Transcriptional activator that binds specifically to the DNA sequence 5'-[AG]CCGAC-3'. Binding to the C-repeat/DRE element mediates high salinity- and dehydration-inducible transcription. Promotes the expression of heat stress-inducible genes by contributing to the formation of a heat stress-specific transcriptional complex with NF-Y subunits (e.g. DPB3-1, NF-YA2 and NF-YB3) at the promoter of target genes, thus promoting heat tolerance. The polypeptide is Dehydration-responsive element-binding protein 2A (Arabidopsis thaliana (Mouse-ear cress)).